The primary structure comprises 592 residues: A-type ATP synthase subunit A (592 aa).

Residue 234–241 (GGFGTGKT) participates in ATP binding.

This sequence belongs to the ATPase alpha/beta chains family. Has multiple subunits with at least A(3), B(3), C, D, E, F, H, I and proteolipid K(x).

The protein resides in the cell membrane. It catalyses the reaction ATP + H2O + 4 H(+)(in) = ADP + phosphate + 5 H(+)(out). Functionally, component of the A-type ATP synthase that produces ATP from ADP in the presence of a proton gradient across the membrane. The A chain is the catalytic subunit. The protein is A-type ATP synthase subunit A of Cenarchaeum symbiosum (strain A).